A 238-amino-acid chain; its full sequence is Uridylate kinase (238 aa).

12 to 15 is an ATP binding site; sequence KLSG. A UMP-binding site is contributed by Gly-54. Residues Gly-55 and Arg-59 each coordinate ATP. UMP contacts are provided by residues Asp-74 and 135 to 142; that span reads TGNPYFTT. ATP-binding residues include Thr-162, Asn-163, Tyr-168, and Asp-171.

It belongs to the UMP kinase family. In terms of assembly, homohexamer.

The protein resides in the cytoplasm. It carries out the reaction UMP + ATP = UDP + ADP. The protein operates within pyrimidine metabolism; CTP biosynthesis via de novo pathway; UDP from UMP (UMPK route): step 1/1. Its activity is regulated as follows. Inhibited by UTP. Its function is as follows. Catalyzes the reversible phosphorylation of UMP to UDP. The sequence is that of Uridylate kinase from Bradyrhizobium sp. (strain ORS 278).